A 136-amino-acid polypeptide reads, in one-letter code: Large ribosomal subunit protein uL16 (136 aa).

This sequence belongs to the universal ribosomal protein uL16 family. As to quaternary structure, part of the 50S ribosomal subunit.

Its function is as follows. Binds 23S rRNA and is also seen to make contacts with the A and possibly P site tRNAs. In Citrobacter koseri (strain ATCC BAA-895 / CDC 4225-83 / SGSC4696), this protein is Large ribosomal subunit protein uL16.